The chain runs to 441 residues: Tubulin beta chain (441 aa).

GTP is bound by residues Q11, E69, S138, G142, T143, G144, N204, and N226. E69 is a binding site for Mg(2+).

Belongs to the tubulin family. As to quaternary structure, dimer of alpha and beta chains. A typical microtubule is a hollow water-filled tube with an outer diameter of 25 nm and an inner diameter of 15 nM. Alpha-beta heterodimers associate head-to-tail to form protofilaments running lengthwise along the microtubule wall with the beta-tubulin subunit facing the microtubule plus end conferring a structural polarity. Microtubules usually have 13 protofilaments but different protofilament numbers can be found in some organisms and specialized cells. It depends on Mg(2+) as a cofactor.

It is found in the cytoplasm. The protein resides in the cytoskeleton. Its function is as follows. Tubulin is the major constituent of microtubules, a cylinder consisting of laterally associated linear protofilaments composed of alpha- and beta-tubulin heterodimers. Microtubules grow by the addition of GTP-tubulin dimers to the microtubule end, where a stabilizing cap forms. Below the cap, tubulin dimers are in GDP-bound state, owing to GTPase activity of alpha-tubulin. In Babesia bovis, this protein is Tubulin beta chain.